A 187-amino-acid chain; its full sequence is Large ribosomal subunit protein uL5 (187 aa).

The protein belongs to the universal ribosomal protein uL5 family. In terms of assembly, part of the 50S ribosomal subunit; part of the 5S rRNA/L5/L18/L25 subcomplex. Contacts the 5S rRNA and the P site tRNA. Forms a bridge to the 30S subunit in the 70S ribosome.

Its function is as follows. This is one of the proteins that bind and probably mediate the attachment of the 5S RNA into the large ribosomal subunit, where it forms part of the central protuberance. In the 70S ribosome it contacts protein S13 of the 30S subunit (bridge B1b), connecting the 2 subunits; this bridge is implicated in subunit movement. Contacts the P site tRNA; the 5S rRNA and some of its associated proteins might help stabilize positioning of ribosome-bound tRNAs. The chain is Large ribosomal subunit protein uL5 from Malacoplasma penetrans (strain HF-2) (Mycoplasma penetrans).